A 189-amino-acid polypeptide reads, in one-letter code: Putative biopolymer transport protein ExbB-like 1 (189 aa).

3 helical membrane-spanning segments follow: residues 14 to 34 (FVTT…LWVF), 99 to 119 (LVVL…GTVV), and 147 to 167 (LIAT…YLIL).

This sequence belongs to the ExbB/TolQ family.

The protein resides in the cell inner membrane. The protein is Putative biopolymer transport protein ExbB-like 1 of Helicobacter pylori (strain J99 / ATCC 700824) (Campylobacter pylori J99).